The chain runs to 283 residues: NADPH-dependent 7-cyano-7-deazaguanine reductase (283 aa).

Residue 89–91 participates in substrate binding; that stretch reads IES. An NADPH-binding site is contributed by 91–92; sequence SK. Cys190 acts as the Thioimide intermediate in catalysis. Asp197 (proton donor) is an active-site residue. Position 229–230 (229–230) interacts with substrate; the sequence is HE. 258–259 lines the NADPH pocket; it reads RG.

The protein belongs to the GTP cyclohydrolase I family. QueF type 2 subfamily. As to quaternary structure, homodimer.

The protein localises to the cytoplasm. It carries out the reaction 7-aminomethyl-7-carbaguanine + 2 NADP(+) = 7-cyano-7-deazaguanine + 2 NADPH + 3 H(+). Its pathway is tRNA modification; tRNA-queuosine biosynthesis. Functionally, catalyzes the NADPH-dependent reduction of 7-cyano-7-deazaguanine (preQ0) to 7-aminomethyl-7-deazaguanine (preQ1). The polypeptide is NADPH-dependent 7-cyano-7-deazaguanine reductase (Aromatoleum aromaticum (strain DSM 19018 / LMG 30748 / EbN1) (Azoarcus sp. (strain EbN1))).